The primary structure comprises 360 residues: Aminomethyltransferase (360 aa).

Belongs to the GcvT family. In terms of assembly, the glycine cleavage system is composed of four proteins: P, T, L and H.

It carries out the reaction N(6)-[(R)-S(8)-aminomethyldihydrolipoyl]-L-lysyl-[protein] + (6S)-5,6,7,8-tetrahydrofolate = N(6)-[(R)-dihydrolipoyl]-L-lysyl-[protein] + (6R)-5,10-methylene-5,6,7,8-tetrahydrofolate + NH4(+). The glycine cleavage system catalyzes the degradation of glycine. This Legionella pneumophila (strain Paris) protein is Aminomethyltransferase.